Here is a 298-residue protein sequence, read N- to C-terminus: Acetylglutamate kinase (298 aa).

Substrate is bound by residues 69-70 (GG), Arg-91, and Asn-196.

It belongs to the acetylglutamate kinase family. ArgB subfamily.

It localises to the cytoplasm. The catalysed reaction is N-acetyl-L-glutamate + ATP = N-acetyl-L-glutamyl 5-phosphate + ADP. The protein operates within amino-acid biosynthesis; L-arginine biosynthesis; N(2)-acetyl-L-ornithine from L-glutamate: step 2/4. In terms of biological role, catalyzes the ATP-dependent phosphorylation of N-acetyl-L-glutamate. The polypeptide is Acetylglutamate kinase (Nitrobacter hamburgensis (strain DSM 10229 / NCIMB 13809 / X14)).